The primary structure comprises 355 residues: Guanine nucleotide-binding protein G(i) subunit alpha-2 (355 aa).

G2 is lipidated: N-myristoyl glycine. C3 is lipidated: S-palmitoyl cysteine. Positions 32–355 constitute a G-alpha domain; it reads REVKLLLLGA…KNNLKDCGLF (324 aa). The tract at residues 35-48 is G1 motif; it reads KLLLLGAGESGKST. GTP is bound by residues 40-47, 176-182, 201-205, 270-273, and A327; these read GAGESGKS, LRTRVKT, DVGGQ, and NKKD. Residues S47 and T182 each contribute to the Mg(2+) site. The interval 174–182 is G2 motif; the sequence is DVLRTRVKT. The interval 197–206 is G3 motif; it reads FKMFDVGGQR. The G4 motif stretch occupies residues 266–273; it reads ILFLNKKD. Residues 325–330 form a G5 motif region; the sequence is TCATDT.

It belongs to the G-alpha family. G(i/o/t/z) subfamily. As to quaternary structure, g proteins are composed of 3 units; alpha, beta and gamma. The alpha chain contains the guanine nucleotide binding site. In this context, interacts with GNB2. Interacts with UNC5B. Interacts with GPSM1. Interacts with RGS12 and RGS14. Interacts (inactive GDP-bound form) with NUCB1 (via GBA motif); the interaction leads to activation of GNAI3. Interacts (inactive GDP-bound form) with CCDC88C/DAPLE (via GBA motif). Interacts (inactive GDP-bound form) with CCDC8A/GIV (via GBA motif). Interacts with CXCR1 and CXCR2.

The protein localises to the cytoplasm. Its subcellular location is the cytoskeleton. It localises to the microtubule organizing center. It is found in the centrosome. The protein resides in the cell membrane. The protein localises to the membrane. Functionally, guanine nucleotide-binding proteins (G proteins) are involved as modulators or transducers in various transmembrane signaling systems. The G(i) proteins are involved in hormonal regulation of adenylate cyclase: they inhibit the cyclase in response to beta-adrenergic stimuli. May play a role in cell division. The protein is Guanine nucleotide-binding protein G(i) subunit alpha-2 (GNAI2) of Canis lupus familiaris (Dog).